The chain runs to 534 residues: Calcium-dependent protein kinase 29 (534 aa).

The segment at 1–72 is disordered; the sequence is MGFCFSKFGK…STSSGSQIGP (72 aa). Residue Gly2 is the site of N-myristoyl glycine attachment. The segment covering 16 to 27 has biased composition (low complexity); that stretch reads IPISSSSDSSPP. Pro residues predominate over residues 49-63; that stretch reads NPQPKPKPAPPPPPS. One can recognise a Protein kinase domain in the interval 85–343; it reads YDLHKELGRG…AAEALEHPWM (259 aa). Residues 91 to 99 and Lys114 contribute to the ATP site; that span reads LGRGQFGIT. Asp209 acts as the Proton acceptor in catalysis. Ser249 carries the post-translational modification Phosphoserine. An autoinhibitory domain region spans residues 348–378; that stretch reads ISDKPINSAVLVRMKQFRAMNKLKKLALKVI. EF-hand domains lie at 385 to 420, 421 to 456, 457 to 492, and 493 to 527; these read EEIK…LGSK, LTES…RHRL, EKEE…YGMG, and DDAT…GTTD. Asp398, Asp400, Ser402, Thr404, Glu409, Asp434, Asp436, Ser438, Thr440, Glu445, Asp470, Asp472, Ser474, Glu481, Asp505, Asp507, Asp509, Arg511, and Glu516 together coordinate Ca(2+).

The protein belongs to the protein kinase superfamily. Ser/Thr protein kinase family. CDPK subfamily.

The protein localises to the membrane. It carries out the reaction L-seryl-[protein] + ATP = O-phospho-L-seryl-[protein] + ADP + H(+). The enzyme catalyses L-threonyl-[protein] + ATP = O-phospho-L-threonyl-[protein] + ADP + H(+). Activated by calcium. Autophosphorylation may play an important role in the regulation of the kinase activity. May play a role in signal transduction pathways that involve calcium as a second messenger. The polypeptide is Calcium-dependent protein kinase 29 (CPK29) (Arabidopsis thaliana (Mouse-ear cress)).